The primary structure comprises 231 residues: Ribonuclease HII (231 aa).

An RNase H type-2 domain is found at 38-227 (ELVAGGDEAG…IKSFYGQLKL (190 aa)). The a divalent metal cation site is built by aspartate 44, glutamate 45, and aspartate 136.

Belongs to the RNase HII family. It depends on Mn(2+) as a cofactor. Mg(2+) is required as a cofactor.

It is found in the cytoplasm. It catalyses the reaction Endonucleolytic cleavage to 5'-phosphomonoester.. In terms of biological role, endonuclease that specifically degrades the RNA of RNA-DNA hybrids. The sequence is that of Ribonuclease HII from Carboxydothermus hydrogenoformans (strain ATCC BAA-161 / DSM 6008 / Z-2901).